Consider the following 92-residue polypeptide: Probable Fe(2+)-trafficking protein (92 aa).

Belongs to the Fe(2+)-trafficking protein family.

Its function is as follows. Could be a mediator in iron transactions between iron acquisition and iron-requiring processes, such as synthesis and/or repair of Fe-S clusters in biosynthetic enzymes. This Shewanella halifaxensis (strain HAW-EB4) protein is Probable Fe(2+)-trafficking protein.